The primary structure comprises 537 residues: Quadr-hydrophobin (537 aa).

The first 17 residues, 1-17 (MKFITVAAALFASTSLA), serve as a signal peptide directing secretion. Hydrophobin regions lie at residues 63 to 199 (GGNP…QNPI), 200 to 299 (GGNP…ENPT), 300 to 421 (GGNP…QDPL), and 422 to 537 (GGNP…RAII). N-linked (GlcNAc...) asparagine glycosylation is found at asparagine 70 and asparagine 113. 16 disulfides stabilise this stretch: cysteine 134–cysteine 183, cysteine 144–cysteine 174, cysteine 145–cysteine 157, cysteine 184–cysteine 195, cysteine 234–cysteine 283, cysteine 244–cysteine 274, cysteine 245–cysteine 257, cysteine 284–cysteine 295, cysteine 356–cysteine 405, cysteine 366–cysteine 396, cysteine 367–cysteine 379, cysteine 406–cysteine 417, cysteine 471–cysteine 520, cysteine 481–cysteine 511, cysteine 482–cysteine 494, and cysteine 521–cysteine 532.

This sequence belongs to the cerato-ulmin hydrophobin family. Homotetramer. Further self-assembles to form highly ordered films at water-air interfaces through intermolecular interactions.

It is found in the secreted. Its subcellular location is the cell wall. Its function is as follows. Aerial growth, conidiation, and dispersal of filamentous fungi in the environment rely upon a capability of their secreting small amphipathic proteins called hydrophobins (HPBs) with low sequence identity. Class I can self-assemble into an outermost layer of rodlet bundles on aerial cell surfaces, conferring cellular hydrophobicity that supports fungal growth, development and dispersal; whereas Class II form highly ordered films at water-air interfaces through intermolecular interactions but contribute nothing to the rodlet structure. This chain is Quadr-hydrophobin, found in Cordyceps militaris (Caterpillar fungus).